Here is a 530-residue protein sequence, read N- to C-terminus: MSSTASYRIFNFARNRIAVLRGGRRLYSRAATSRNQVKWRLFSPASLAVNDSSPHGGFALRKAYRHTSTEEEDFHLQLSPEQVSDLLRAGESSHKVLDFNSGVPNSVLRFESNQLAANSPVEDRQGVASCVQTRGTMFGIFDGHGGHACAQAVSERLFYYMAVSLMSHKTLEQMEEAMENMKPLLPILQWLKHPGDSIYKDITSVHLDHLRVYWQELLDLHMETGLSTEEALMYSFQRLDSDISLEIQAPLEDEVTKNLSLQVAFSGATACMAHVDGVHLHIANAGDCRAILGVQGDNGAWSCLPLTCDHNAWNEAELSRLKREHPESEDRTLIIDDRLLGVLLPCRAFGDVQLKWSKELQRNVLERGFDTEALNIYQFTPPHYHTPPYLTAKPEVTYHRLRPQDKFLVLASDGLWDMLDNEDVVRLVVGHLSKVGHQKPALDQRPANLGHMQSLLLQRKASGLHAADQNAATHLIRHAIGSNEYGEMEPERLAAMLTLPEDVARMYRDDITVMVVFFNSESIDTYFKEG.

Residues 1 to 67 (MSSTASYRIF…FALRKAYRHT (67 aa)) constitute a mitochondrion transit peptide. Residues 107–518 (VLRFESNQLA…DDITVMVVFF (412 aa)) enclose the PPM-type phosphatase domain. Mn(2+) is bound by residues aspartate 142, glycine 143, aspartate 413, and aspartate 509.

This sequence belongs to the PP2C family. Mg(2+) serves as cofactor. In terms of tissue distribution, highly expressed in liver.

The protein resides in the mitochondrion. The enzyme catalyses O-phospho-L-seryl-[pyruvate dehydrogenase E1 alpha subunit] + H2O = L-seryl-[pyruvate dehydrogenase E1 alpha subunit] + phosphate. With respect to regulation, mg(2+)-dependent protein phosphatase. Phosphatase activity is increased in the presence of spermine, a naturally produced polyamine. Functionally, mitochondrial enzyme that catalyzes the dephosphorylation and concomitant reactivation of the alpha subunit of the E1 component of the pyruvate dehydrogenase complex (PDC), thereby stimulating the conversion of pyruvate into acetyl-CoA. Acts as a crucial regulator of T cell metabolism and function, with a particular focus on T-helper Th17. The sequence is that of [Pyruvate dehydrogenase [acetyl-transferring]]-phosphatase 2, mitochondrial (Pdp2) from Rattus norvegicus (Rat).